Here is a 448-residue protein sequence, read N- to C-terminus: Fibulin-5 (448 aa).

The first 23 residues, 1-23 (MPGFKRILTVTVLALCLPTPGNA), serve as a signal peptide directing secretion. In terms of domain architecture, EGF-like 1; calcium-binding spans 42-82 (DVDECRTIPEACRGDMMCVNQNGGYLCIPRTNPVYRGPYSN). 17 disulfide bridges follow: Cys-46-Cys-59, Cys-53-Cys-68, Cys-131-Cys-144, Cys-138-Cys-153, Cys-155-Cys-166, Cys-172-Cys-181, Cys-177-Cys-190, Cys-192-Cys-205, Cys-211-Cys-221, Cys-217-Cys-230, Cys-232-Cys-245, Cys-251-Cys-262, Cys-258-Cys-271, Cys-273-Cys-286, Cys-292-Cys-305, Cys-299-Cys-314, and Cys-320-Cys-332. A Cell attachment site motif is present at residues 54-56 (RGD). The EGF-like 2; calcium-binding domain maps to 127 to 167 (DVDECATDSHQCNPTQICINTEGGYTCSCTDGYWLLEGQCL). The EGF-like 3; calcium-binding domain maps to 168 to 206 (DIDECRYGYCQQLCANVPGSYSCTCNPGFTLNEDGRSCQ). One can recognise an EGF-like 4; calcium-binding domain in the interval 207–246 (DVNECATENPCVQTCVNTYGSFICRCDPGYELEDDGVHCS). Positions 245–448 (CSDMDECSFS…LRIYVSQYPF (204 aa)) are interaction with LOXL1. An EGF-like 5; calcium-binding domain is found at 247 to 287 (DMDECSFSEFLCQHECVNQPGTYFCSCPAGYILLDDNRSCQ). 2 N-linked (GlcNAc...) asparagine glycosylation sites follow: Asn-283 and Asn-296. In terms of domain architecture, EGF-like 6; calcium-binding spans 288–333 (DINECEHRNHTCILQQTCYNLQGGFKCIDPIRCEEPYLRISDNRCM).

Belongs to the fibulin family. As to quaternary structure, homodimer. Monomer, homodimerizes in presence of Ca(2+). Interacts with ELN. Interacts (via N-terminus) with the integrins ITGAV/ITGB3, ITGAV/ITGB5 and ITGA9/ITGB1. Interacts with FBN1 (via N-terminal domain). Forms a ternary complex with ELN and FBN1. Interacts with EFEMP2 with moderate affinity. Interacts with LOXL1. Post-translationally, N-glycosylated.

The protein localises to the secreted. It localises to the extracellular space. Its subcellular location is the extracellular matrix. Its function is as follows. Essential for elastic fiber formation, is involved in the assembly of continuous elastin (ELN) polymer and promotes the interaction of microfibrils and ELN. Stabilizes and organizes elastic fibers in the skin, lung and vasculature. Promotes adhesion of endothelial cells through interaction of integrins and the RGD motif. Vascular ligand for integrin receptors which may play a role in vascular development and remodeling. May act as an adapter that mediates the interaction between FBN1 and ELN. The protein is Fibulin-5 (FBLN5) of Bos taurus (Bovine).